The primary structure comprises 505 residues: Trans-cinnamate 4-monooxygenase C4H2 (505 aa).

Short sequence motifs (nuclear localization signal) lie at residues 161-168 (VKKMKESN) and 247-254 (EKRLKLFK). Cysteine 447 serves as a coordination point for heme.

It belongs to the cytochrome P450 family. Heme serves as cofactor.

It localises to the nucleus. The enzyme catalyses (E)-cinnamate + reduced [NADPH--hemoprotein reductase] + O2 = (E)-4-coumarate + oxidized [NADPH--hemoprotein reductase] + H2O + H(+). The protein operates within phenylpropanoid metabolism; trans-4-coumarate biosynthesis; trans-4-coumarate from trans-cinnamate: step 1/1. Its function is as follows. Component of the floral volatile benzenoid/phenylpropanoid (FVBP) biosynthetic pathway that controls carbon flux to pigments essential for pollination or UV protection, to numerous pytoalexins synthesized by plants when challenged by pathogens, and to lignins. The protein is Trans-cinnamate 4-monooxygenase C4H2 of Petunia hybrida (Petunia).